A 153-amino-acid polypeptide reads, in one-letter code: Arachidonate 5-lipoxygenase-activating protein (153 aa).

At 1 to 8 the chain is on the lumenal side; sequence MDQETVGN. The chain crosses the membrane as a helical span at residues 9-30; sequence VVLLAIVTLISVVQNGFFAHKV. The Cytoplasmic segment spans residues 31-52; sequence EHESRTQNGRSFQRTGTLAFER. Residues 53–77 form a helical membrane-spanning segment; that stretch reads VYTANQNCVDAYPTFLAVLWSAGLL. Topologically, residues 78 to 80 are lumenal; the sequence is CSQ. A helical membrane pass occupies residues 81-102; that stretch reads VPAAFAGLMYLLVRQKYFVGYL. Residues 103 to 107 are Cytoplasmic-facing; sequence GERTQ. An intramembrane segment occupies 108–115; that stretch reads STPGYIFG. The chain crosses the membrane as a helical span at residues 116–128; it reads KRIILFLFLMSVA. At 129–153 the chain is on the lumenal side; the sequence is GIFNYYLIFFFGSDFENYIKTVTTT.

The protein belongs to the MAPEG family. In terms of assembly, homotrimer. Interacts with LTC4S and ALOX5.

The protein resides in the nucleus membrane. It is found in the endoplasmic reticulum membrane. Its function is as follows. Required for leukotriene biosynthesis by ALOX5 (5-lipoxygenase). Anchors ALOX5 to the membrane. Binds arachidonic acid, and could play an essential role in the transfer of arachidonic acid to ALOX5. Binds to MK-886, a compound that blocks the biosynthesis of leukotrienes. The sequence is that of Arachidonate 5-lipoxygenase-activating protein (ALOX5AP) from Macaca mulatta (Rhesus macaque).